A 111-amino-acid chain; its full sequence is UPF0060 membrane protein Pden_1837 (111 aa).

The next 4 membrane-spanning stretches (helical) occupy residues 7–27 (IAVY…FWAW), 30–50 (LGKS…FAWL), 62–82 (AYAA…WLTE), and 91–111 (ILGG…PRAA).

It belongs to the UPF0060 family.

It localises to the cell inner membrane. This chain is UPF0060 membrane protein Pden_1837, found in Paracoccus denitrificans (strain Pd 1222).